The primary structure comprises 228 residues: Uracil-DNA glycosylase (228 aa).

D64 functions as the Proton acceptor in the catalytic mechanism.

It belongs to the uracil-DNA glycosylase (UDG) superfamily. UNG family.

It localises to the cytoplasm. The catalysed reaction is Hydrolyzes single-stranded DNA or mismatched double-stranded DNA and polynucleotides, releasing free uracil.. In terms of biological role, excises uracil residues from the DNA which can arise as a result of misincorporation of dUMP residues by DNA polymerase or due to deamination of cytosine. This chain is Uracil-DNA glycosylase, found in Yersinia pseudotuberculosis serotype O:1b (strain IP 31758).